A 526-amino-acid chain; its full sequence is Dolichyl pyrophosphate Glc1Man9GlcNAc2 alpha-1,3-glucosyltransferase (526 aa).

The next 11 membrane-spanning stretches (helical) occupy residues 9–29, 108–128, 143–163, 188–208, 238–258, 334–354, 361–380, 400–422, 427–449, 461–481, and 487–507; these read AGGH…CLLI, FSVI…CKCI, FILS…HIHF, GALL…VAPA, VTSL…PFLA, PLAT…CLWF, GFLR…GWHV, AGDA…PLLF, LPIK…KTLF, TVYL…LPFT, and YPFI…TYAW.

This sequence belongs to the ALG6/ALG8 glucosyltransferase family.

The protein localises to the endoplasmic reticulum membrane. The enzyme catalyses an alpha-D-Glc-(1-&gt;3)-alpha-D-Man-(1-&gt;2)-alpha-D-Man-(1-&gt;2)-alpha-D-Man-(1-&gt;3)-[alpha-D-Man-(1-&gt;2)-alpha-D-Man-(1-&gt;3)-[alpha-D-Man-(1-&gt;2)-alpha-D-Man-(1-&gt;6)]-alpha-D-Man-(1-&gt;6)]-beta-D-Man-(1-&gt;4)-beta-D-GlcNAc-(1-&gt;4)-alpha-D-GlcNAc-diphospho-di-trans,poly-cis-dolichol + a di-trans,poly-cis-dolichyl beta-D-glucosyl phosphate = an alpha-D-Glc-(1-&gt;3)-alpha-D-Glc-(1-&gt;3)-alpha-D-Man-(1-&gt;2)-alpha-D-Man-(1-&gt;2)-alpha-D-Man-(1-&gt;3)-[alpha-D-Man-(1-&gt;2)-alpha-D-Man-(1-&gt;3)-[alpha-D-Man-(1-&gt;2)-alpha-D-Man-(1-&gt;6)]-alpha-D-Man-(1-&gt;6)]-beta-D-Man-(1-&gt;4)-beta-D-GlcNAc-(1-&gt;4)-alpha-D-GlcNAc-diphospho-di-trans,poly-cis-dolichol + a di-trans,poly-cis-dolichyl phosphate + H(+). It participates in protein modification; protein glycosylation. Its function is as follows. Dolichyl pyrophosphate Glc1Man9GlcNAc2 alpha-1,3-glucosyltransferase that operates in the biosynthetic pathway of dolichol-linked oligosaccharides, the glycan precursors employed in protein asparagine (N)-glycosylation. The assembly of dolichol-linked oligosaccharides begins on the cytosolic side of the endoplasmic reticulum membrane and finishes in its lumen. The sequential addition of sugars to dolichol pyrophosphate produces dolichol-linked oligosaccharides containing fourteen sugars, including two GlcNAcs, nine mannoses and three glucoses. Once assembled, the oligosaccharide is transferred from the lipid to nascent proteins by oligosaccharyltransferases. In the lumen of the endoplasmic reticulum, adds the second glucose residue from dolichyl phosphate glucose (Dol-P-Glc) onto the lipid-linked oligosaccharide intermediate Glc(1)Man(9)GlcNAc(2)-PP-Dol to produce Glc(2)Man(9)GlcNAc(2)-PP-Dol. Glc(2)Man(9)GlcNAc(2)-PP-Dol is a substrate for ALG10, the following enzyme in the biosynthetic pathway. Required for PKD1/Polycystin-1 maturation and localization to the plasma membrane of the primary cilia. This Mus musculus (Mouse) protein is Dolichyl pyrophosphate Glc1Man9GlcNAc2 alpha-1,3-glucosyltransferase.